Here is a 317-residue protein sequence, read N- to C-terminus: Melanocyte-stimulating hormone receptor (317 aa).

The Extracellular segment spans residues 1-37 (MPMQGAQRKLLGSLNSTPTATSNLGLAANHTGAPCLE). An N-linked (GlcNAc...) asparagine glycan is attached at Asn29. The helical transmembrane segment at 38–63 (VSIPDGLFLSLGLVSLVENVLVVAAV) threads the bilayer. The Cytoplasmic portion of the chain corresponds to 64-72 (AKNRNLHSS). Residues 73–93 (MYCFICCLALSDLLVSGSNML) traverse the membrane as a helical segment. Residues 94 to 118 (ETAVILLLETGALATRTSVVQQLHN) lie on the Extracellular side of the membrane. The chain crosses the membrane as a helical span at residues 119–140 (TINVLTCSSMLCSLCFLGAIAV). Residues 141-163 (DRYISIFYALRYHSIMTLPRAQR) lie on the Cytoplasmic side of the membrane. Residues 164–183 (AIAAIWVASVLSSTLFITYY) traverse the membrane as a helical segment. Residues 184–191 (DHAAVLLC) lie on the Extracellular side of the membrane. The helical transmembrane segment at 192–211 (LVVFFLAMLVLMAVLYVHML) threads the bilayer. At 212 to 240 (ARACQHAHGIIRLHKRQTPAHQGFGLRGA) the chain is on the cytoplasmic side. A helical transmembrane segment spans residues 241 to 266 (ATLTILLGIFFLCWGPFFLHLTLVVF). Residues 267–279 (CPQHLTCSCIFKN) lie on the Extracellular side of the membrane. A helical membrane pass occupies residues 280–300 (FKVFLTLIICNTIIDPLIYAF). Topologically, residues 301–317 (RSQELRRTLKEVLLCSW) are cytoplasmic. Cys315 carries S-palmitoyl cysteine lipidation.

This sequence belongs to the G-protein coupled receptor 1 family. Interacts with MGRN1, but does not undergo MGRN1-mediated ubiquitination; this interaction competes with GNAS-binding and thus inhibits agonist-induced cAMP production. Interacts with OPN3; the interaction results in a decrease in MC1R-mediated cAMP signaling and ultimately a decrease in melanin production in melanocytes.

The protein localises to the cell membrane. Receptor for MSH (alpha, beta and gamma) and ACTH. The activity of this receptor is mediated by G proteins which activate adenylate cyclase. Mediates melanogenesis, the production of eumelanin (black/brown) and phaeomelanin (red/yellow), via regulation of cAMP signaling in melanocytes. This chain is Melanocyte-stimulating hormone receptor (MC1R), found in Saguinus oedipus (Cotton-top tamarin).